The following is a 444-amino-acid chain: MSKVAIIGAGPCGLSILRAFEHLEKKGEKIPEIVCFEKQESWGGLWNYNWRTGSDQYGDPVPNSMYRYLWSNGPKECLEFADYSFDQHFGKSIPSFPPREVLQDYILGRVSKGNIKNKIKFNTRVINTVYRNDKFEINYQDKVNDKTLSDTFDYLVVSTGHFSVPFIPEYEGMSSFPGRIMHSHDFRDAEEFRGKNVIVLGSSYSAEDVALQCNKYGAKSVTIGYRHNPMGFKWPKGMKEVHYLDKLDGKKAIFKDGTEQDADVVILCTGYLHHFPFLDESLKLKTHNRLYPPKLYKGVVWQDNHKLLYLGMQDQFHTFNMFDCQAWFARDVIMDKIKMPSDDEIDKDINKWVSMEEKLENPDQMIDFQTEYTKELHNISDYPKIDFELIRKHFKEWEHHKVEDILTYRNKSFSSPVTGSVAPVHHTPWEKAMDDSMKTFLNKR.

FAD is bound by residues Cys-12, Glu-37, Gln-39, Leu-45, and Trp-46. NADP(+) is bound by residues Trp-70 and Asn-72. FAD contacts are provided by Asn-72 and Val-125. Positions 170, 202, 203, 205, 226, 227, and 288 each coordinate NADP(+). The FAD site is built by Gln-315 and Thr-318. Arg-409 contributes to the NADP(+) binding site.

The protein belongs to the FMO family. As to quaternary structure, homodimer. FAD serves as cofactor.

The enzyme catalyses trimethylamine + NADPH + O2 = trimethylamine N-oxide + NADP(+) + H2O. Functionally, catalyzes the oxidation of trimethylamine (TMA) to produce trimethylamine N-oxide (TMAO). In vitro, has a broad substrate specificity, oxidizing many nitrogen- and sulfur-containing compounds, including dimethylamine (DMA), dimethylsulfide (DMS), dimethylsulfoxide (DMSO) and methimazole. TMA shows the highest affinity. In Pelagibacter sp. (strain HTCC7211), this protein is Trimethylamine monooxygenase.